Consider the following 155-residue polypeptide: Regulatory protein RecX (155 aa).

This sequence belongs to the RecX family.

It localises to the cytoplasm. In terms of biological role, modulates RecA activity. In Pseudomonas fluorescens (strain SBW25), this protein is Regulatory protein RecX.